The chain runs to 302 residues: Segregation and condensation protein A (302 aa).

The protein belongs to the ScpA family. In terms of assembly, component of a cohesin-like complex composed of ScpA, ScpB and the Smc homodimer, in which ScpA and ScpB bind to the head domain of Smc. The presence of the three proteins is required for the association of the complex with DNA.

Its subcellular location is the cytoplasm. Its function is as follows. Participates in chromosomal partition during cell division. May act via the formation of a condensin-like complex containing Smc and ScpB that pull DNA away from mid-cell into both cell halves. The protein is Segregation and condensation protein A of Xylella fastidiosa (strain 9a5c).